The chain runs to 265 residues: DNA-binding dual transcriptional regulator Rns (265 aa).

Residues His20 and Arg75 each contribute to the decanoate site. Residues 164–261 (DKVRNLIEKD…GVTPKQFFTY (98 aa)) enclose the HTH araC/xylS-type domain. 2 consecutive DNA-binding regions (H-T-H motif) follow at residues 181-202 (GIIADAFNASEITIRKRLESEN) and 228-251 (ISQISNMIGISSASYFIRIFNKHY).

In terms of assembly, homodimer; each subunit binds one decanoate molecule.

The protein resides in the cytoplasm. Its activity is regulated as follows. Rns-dependent expression of pilins and outer membrane proteins CexE-alpha and CexE-epsilon are inhibited in vivo by decanoic acid (decanoate); has no effect on expression of DnaK or flagellins. Decanoate relieves Rns-dependent repression of nlpA. In terms of biological role, a transcription factor required for the expression of the CS1 and CS2 adhesins of enterotoxigenic E.coli. Required for expression of pilins and some outer membrane lipoproteins. Represses expression of nlpA. The sequence is that of DNA-binding dual transcriptional regulator Rns from Escherichia coli.